Reading from the N-terminus, the 412-residue chain is Glucose/galactose transporter (412 aa).

Transmembrane regions (helical) follow at residues 21–41, 62–82, 90–110, 113–133, 158–178, 192–212, 239–259, 310–330, 331–351, 363–383, and 388–408; these read YGFA…ITCL, LIQF…GQLV, GIVV…PAAS, VYAL…ILQV, FNSL…LSAA, FPYL…AILK, LGAI…SFLV, AFVA…IAMW, SVLA…SLAL, GILC…GALA, and IHLA…YGLI.

This sequence belongs to the major facilitator superfamily. FHS transporter (TC 2.A.1.7) family.

It is found in the cell inner membrane. In terms of biological role, intake of glucose and galactose. In Brucella abortus (strain 2308), this protein is Glucose/galactose transporter (gluP).